The following is a 91-amino-acid chain: uncharacterized protein (91 aa).

2 helical membrane-spanning segments follow: residues 22 to 42 and 53 to 73; these read WPVI…AFVV and VAGL…LAAA.

It localises to the cell membrane. This is an uncharacterized protein from Mycobacterium bovis (strain ATCC BAA-935 / AF2122/97).